Here is a 365-residue protein sequence, read N- to C-terminus: Alanine racemase (365 aa).

K32 serves as the catalytic Proton acceptor; specific for D-alanine. K32 carries the N6-(pyridoxal phosphate)lysine modification. Residue R128 participates in substrate binding. Y257 (proton acceptor; specific for L-alanine) is an active-site residue. Position 305 (M305) interacts with substrate.

Belongs to the alanine racemase family. Pyridoxal 5'-phosphate is required as a cofactor.

It carries out the reaction L-alanine = D-alanine. It functions in the pathway amino-acid biosynthesis; D-alanine biosynthesis; D-alanine from L-alanine: step 1/1. Functionally, catalyzes the interconversion of L-alanine and D-alanine. May also act on other amino acids. This Francisella tularensis subsp. tularensis (strain WY96-3418) protein is Alanine racemase (alr).